Consider the following 768-residue polypeptide: Tripartite motif-containing protein 67 (768 aa).

An RING-type; degenerate zinc finger spans residues 7-42 (CPVCGSLFREPIILPCSHNVCLPCARTIAVQTPDGE). Residues 55 to 70 (AAAAATPPDQDAAAGA) show a composition bias toward low complexity. 2 disordered regions span residues 55–74 (AAAAATPPDQDAAAGATSGG) and 247–284 (QPPPPPTPPEATPAVTGTSTASSAGGCRSPGGAGASAP). The segment at 201-248 (AICQLCDRTPPEPAATLCEQCDVLYCATCQLKCHPSRGPFAKHRLVQP) adopts a B box-type 1; degenerate zinc-finger fold. Positions 247 to 257 (QPPPPPTPPEA) are enriched in pro residues. The B box-type 2 zinc finger occupies 285 to 327 (RKFPTCPEHEMENYSMYCVSCRSPVCYMCLEEGRHSKHEVKPL). Zn(2+)-binding residues include cysteine 290, histidine 293, cysteine 313, and histidine 319. The stretch at 332–369 (KQHKAQLSQALNGVSDKAKEAKEFLVQLKNILQQIQEN) forms a coiled coil. Residues 435 to 493 (IKEDDPSGFLQISDALIKRVQTSQEQWVKGALEPKVSAEFDLTLDSEPLLQAIHQLDFV) form the COS domain. A Fibronectin type-III domain is found at 498–592 (PPVPLLQLEK…KTVVLQTSDV (95 aa)). A B30.2/SPRY domain is found at 574–765 (NSSGVGPYSK…VPTNLGRPKL (192 aa)).

The protein localises to the cytoplasm. The protein resides in the cytoskeleton. The chain is Tripartite motif-containing protein 67 (Trim67) from Mus musculus (Mouse).